Reading from the N-terminus, the 75-residue chain is Theromacin (75 aa).

Intrachain disulfides connect Cys-2–Cys-9, Cys-24–Cys-28, Cys-31–Cys-73, Cys-39–Cys-47, and Cys-57–Cys-59.

Belongs to the macin family.

It is found in the secreted. Functionally, has a bactericial activity. The protein is Theromacin of Hirudo medicinalis (Medicinal leech).